The following is a 249-amino-acid chain: 2-dehydro-3-deoxy-L-rhamnonate dehydrogenase (NAD(+)) (249 aa).

Catalysis depends on tyrosine 156, which acts as the Proton acceptor.

It belongs to the short-chain dehydrogenases/reductases (SDR) family. Homotetramer.

It carries out the reaction 2-dehydro-3-deoxy-L-rhamnonate + NAD(+) = 2,4-didehydro-3-deoxy-L-rhamnonate + NADH + H(+). It functions in the pathway carbohydrate degradation; L-rhamnose degradation. Functionally, catalyzes the NAD(+)-dependent dehydrogenation of 2-dehydro-3-deoxy-L-rhamnonate to form 2,4-didehydro-3-deoxy-L-rhamnonate. Does not show any detectable activity in the presence of NADP(+). Catalyzes the fourth step in an alternative pathway for rhamnose utilization that does not involve phosphorylated intermediates. This Sphingomonas sp. (strain SKA58) protein is 2-dehydro-3-deoxy-L-rhamnonate dehydrogenase (NAD(+)).